We begin with the raw amino-acid sequence, 408 residues long: Argininosuccinate synthase (408 aa).

ATP is bound by residues 10-18 and Ala37; that span reads AYSGGLDTS. 2 residues coordinate L-citrulline: Tyr90 and Ser95. Gly120 lines the ATP pocket. L-aspartate contacts are provided by Thr122, Asn126, and Asp127. Asn126 provides a ligand contact to L-citrulline. Arg130, Ser181, Ser190, Glu266, and Tyr278 together coordinate L-citrulline.

It belongs to the argininosuccinate synthase family. Type 1 subfamily. Homotetramer.

Its subcellular location is the cytoplasm. The enzyme catalyses L-citrulline + L-aspartate + ATP = 2-(N(omega)-L-arginino)succinate + AMP + diphosphate + H(+). The protein operates within amino-acid biosynthesis; L-arginine biosynthesis; L-arginine from L-ornithine and carbamoyl phosphate: step 2/3. This Cereibacter sphaeroides (strain ATCC 17025 / ATH 2.4.3) (Rhodobacter sphaeroides) protein is Argininosuccinate synthase.